The primary structure comprises 190 residues: Translation initiation factor IF-3 (190 aa).

It belongs to the IF-3 family. As to quaternary structure, monomer.

The protein localises to the cytoplasm. Functionally, IF-3 binds to the 30S ribosomal subunit and shifts the equilibrium between 70S ribosomes and their 50S and 30S subunits in favor of the free subunits, thus enhancing the availability of 30S subunits on which protein synthesis initiation begins. This chain is Translation initiation factor IF-3, found in Prochlorococcus marinus (strain MIT 9301).